The primary structure comprises 446 residues: tRNA-2-methylthio-N(6)-dimethylallyladenosine synthase (446 aa).

The region spanning 3–124 (KKLYIKTYGC…LPELISKVVR (122 aa)) is the MTTase N-terminal domain. The [4Fe-4S] cluster site is built by Cys12, Cys48, Cys87, Cys162, Cys166, and Cys169. Residues 148-380 (YPQGASSFIS…QKELAAQQLA (233 aa)) form the Radical SAM core domain. The TRAM domain maps to 383–446 (ESCIGSTMKV…LNSLSGEIYR (64 aa)).

Belongs to the methylthiotransferase family. MiaB subfamily. As to quaternary structure, monomer. It depends on [4Fe-4S] cluster as a cofactor.

The protein resides in the cytoplasm. The enzyme catalyses N(6)-dimethylallyladenosine(37) in tRNA + (sulfur carrier)-SH + AH2 + 2 S-adenosyl-L-methionine = 2-methylsulfanyl-N(6)-dimethylallyladenosine(37) in tRNA + (sulfur carrier)-H + 5'-deoxyadenosine + L-methionine + A + S-adenosyl-L-homocysteine + 2 H(+). Its function is as follows. Catalyzes the methylthiolation of N6-(dimethylallyl)adenosine (i(6)A), leading to the formation of 2-methylthio-N6-(dimethylallyl)adenosine (ms(2)i(6)A) at position 37 in tRNAs that read codons beginning with uridine. This Rickettsia bellii (strain OSU 85-389) protein is tRNA-2-methylthio-N(6)-dimethylallyladenosine synthase.